Here is a 1515-residue protein sequence, read N- to C-terminus: Metal resistance protein YCF1 (1515 aa).

At 1–32 (MAGNLVSWACKLCRSPEGFGPISFYGDFTQCF) the chain is on the vacuolar side. Residues 33-53 (IDGVILNLSAIFMITFGIRDL) form a helical membrane-spanning segment. Residues 54–73 (VNLCKKKHSGIKYRRNWIIV) are Cytoplasmic-facing. The helical transmembrane segment at 74-94 (SRMALVLLEIAFVSLASLNIS) threads the bilayer. Topologically, residues 95 to 99 (KEEAE) are vacuolar. Residues 100-120 (NFTIVSQYASTMLSLFVALAL) form a helical membrane-spanning segment. Residues 121-130 (HWIEYDRSVV) are Cytoplasmic-facing. Residues 131-151 (ANTVLLFYWLFETFGNFAKLI) form a helical membrane-spanning segment. The Vacuolar portion of the chain corresponds to 152 to 169 (NILIRHTYEGIWYSGQTG). A helical transmembrane segment spans residues 170 to 190 (FILTLFQVITCASILLLEALP). The Cytoplasmic portion of the chain corresponds to 191-278 (KKPLMPHQHI…QKSNPSLSWA (88 aa)). The residue at position 251 (S251) is a Phosphoserine. Residues 279–299 (ICRTFGSKMLLAAFFKAIHDV) form a helical membrane-spanning segment. Residues 287–590 (MLLAAFFKAI…IPMVLNSFIE (304 aa)) form the ABC transmembrane type-1 1 domain. The Vacuolar portion of the chain corresponds to 300–345 (LAFTQPQLLRILIKFVTDYNSERQDDHSSLQGFENNHPQKLPIVRG). A helical transmembrane segment spans residues 346-366 (FLIAFAMFLVGFTQTSVLHQY). At 367–422 (FLNVFNTGMYIKSALTALIYQKSLVLSNEASGLSSTGDIVNLMSVDVQKLQDLTQW) the chain is on the cytoplasmic side. Residues 423 to 443 (LNLIWSGPFQIIICLYSLYKL) form a helical membrane-spanning segment. Topologically, residues 444-446 (LGN) are vacuolar. Residues 447–467 (SMWVGVIILVIMMPLNSFLMR) traverse the membrane as a helical segment. Residues 468-530 (IQKKLQKSQM…NLTKLGCYMA (63 aa)) are Cytoplasmic-facing. A helical membrane pass occupies residues 531 to 551 (VTSFQFNIVPFLVSCCTFAVF). Residues 552-572 (VYTEDRALTTDLVFPALTLFN) are Vacuolar-facing. The chain crosses the membrane as a helical span at residues 573–593 (LLSFPLMIIPMVLNSFIEASV). Residues 594–943 (SIGRLFTFFT…VKWNIYLEYA (350 aa)) lie on the Cytoplasmic side of the membrane. An ABC transporter 1 domain is found at 626 to 853 (INIGDDATFL…ADSPLWKLLN (228 aa)). 663–670 (GKVGSGKT) lines the ATP pocket. S873, S903, and S908 each carry phosphoserine. Position 911 is a phosphothreonine (T911). S914 is modified (phosphoserine). The chain crosses the membrane as a helical span at residues 944–964 (KACNPKSVCVFILFIVISMFL). The 285-residue stretch at 951–1235 (VCVFILFIVI…IVRMTVEVET (285 aa)) folds into the ABC transmembrane type-1 2 domain. Residues 965–1001 (SVMGNVWLKHWSEVNSRYGSNPNAARYLAIYFALGIG) lie on the Vacuolar side of the membrane. A helical transmembrane segment spans residues 1002–1023 (SALATLIQTIVLWVFCTIHASK). The Cytoplasmic portion of the chain corresponds to 1024–1066 (YLHNLMTNSVLRAPMTFFETTPIGRILNRFSNDIYKVDALLGR). The chain crosses the membrane as a helical span at residues 1067 to 1087 (TFSQFFVNAVKVTFTITVICA). Position 1088 (T1088) is a topological domain, vacuolar. The chain crosses the membrane as a helical span at residues 1089 to 1109 (TWQFIFIIIPLSVFYIYYQQY). Topologically, residues 1110 to 1180 (YLRTSRELRR…NANRWLAYRL (71 aa)) are cytoplasmic. The helical transmembrane segment at 1181-1201 (ELIGSIIILGAATLSVFRLKQ) threads the bilayer. Topologically, residues 1202–1205 (GTLT) are vacuolar. Residues 1206 to 1226 (AGMVGLSLSYALQITQTLNWI) form a helical membrane-spanning segment. At 1227–1515 (VRMTVEVETN…CMEAGLVNEN (289 aa)) the chain is on the cytoplasmic side. The ABC transporter 2 domain occupies 1272–1507 (IKFNNYSTRY…NKSLFYSLCM (236 aa)). 1306 to 1313 (GRTGAGKS) is a binding site for ATP.

Belongs to the ABC transporter superfamily. ABCC family. Conjugate transporter (TC 3.A.1.208) subfamily.

It localises to the vacuole membrane. The enzyme catalyses Cd(2+)(in) + ATP + H2O = Cd(2+)(out) + ADP + phosphate + H(+). It catalyses the reaction an S-substituted glutathione(in) + ATP + H2O = an S-substituted glutathione(out) + ADP + phosphate + H(+). In terms of biological role, cooperates for the ATP-dependent vacuolar transport of bilirubin and glutathione conjugates. The chain is Metal resistance protein YCF1 (YCF1) from Saccharomyces cerevisiae (strain ATCC 204508 / S288c) (Baker's yeast).